A 729-amino-acid polypeptide reads, in one-letter code: Phenylalanine ammonia-lyase (729 aa).

Tyr-77 (proton donor/acceptor) is an active-site residue. A cross-link (5-imidazolinone (Ala-Gly)) is located at residues 182-184; that stretch reads ASG. At Ser-183 the chain carries 2,3-didehydroalanine (Ser). (E)-cinnamate-binding residues include Asn-241, Gln-336, Arg-342, Asn-372, Lys-443, Glu-471, and Asn-474.

Belongs to the PAL/histidase family. Contains an active site 4-methylidene-imidazol-5-one (MIO), which is formed autocatalytically by cyclization and dehydration of residues Ala-Ser-Gly.

It is found in the cytoplasm. The catalysed reaction is L-phenylalanine = (E)-cinnamate + NH4(+). It participates in secondary metabolite biosynthesis. Its pathway is phenylpropanoid metabolism; trans-cinnamate biosynthesis; trans-cinnamate from L-phenylalanine: step 1/1. Phenylalanine ammonia-lyase; part of the gene cluster that mediates the biosynthesis of squalestatin S1 (SQS1, also known as zaragozic acid A), a heavily oxidized fungal polyketide that offers potent cholesterol lowering activity by targeting squalene synthase (SS). SQS1 is composed of a 2,8-dioxobicyclic[3.2.1]octane-3,4,5-tricarboxyclic acid core that is connected to two lipophilic polyketide arms. These initial steps feature the priming of an unusual benzoic acid starter unit onto the highly reducing polyketide synthase pks2, followed by oxaloacetate extension and product release to generate a tricarboxylic acid containing product. The phenylalanine ammonia lyase (PAL) M7 and the acyl-CoA ligase M9 are involved in transforming phenylalanine into benzoyl-CoA. The citrate synthase-like protein R3 is involved in connecting the C-alpha-carbons of the hexaketide chain and oxaloacetate to afford the tricarboxylic acid unit. The potential hydrolytic enzymes, M8 and M10, are in close proximity to pks2 and may participate in product release. On the other side, the tetraketide arm is synthesized by a the squalestatin tetraketide synthase pks1 and enzymatically esterified to the core in the last biosynthetic step, by the acetyltransferase M4. The biosynthesis of the tetraketide must involve 3 rounds of chain extension. After the first and second rounds methyl-transfer occurs, and in all rounds of extension the ketoreductase and dehydratase are active. The enoyl reductase and C-MeT of pks1 are not active in the final round of extension. The acetyltransferase M4 appears to have a broad substrate selectivity for its acyl CoA substrate, allowing the in vitro synthesis of novel squalestatins. The biosynthesis of SQS1 requires several oxidative steps likely performed by oxidoreductases M1, R1 and R2. Finally, in support of the identification of the cluster as being responsible for SQS1 production, the cluster contains a gene encoding a putative squalene synthase (SS) R6, suggesting a likely mechanism for self-resistance. The polypeptide is Phenylalanine ammonia-lyase (Phoma sp. (strain ATCC 20986 / MF5453)).